The sequence spans 209 residues: Type III pantothenate kinase (209 aa).

5-12 (DIGNSNAN) serves as a coordination point for ATP. Residues Y68 and 72-75 (GIDR) contribute to the substrate site. Residue D74 is the Proton acceptor of the active site. D89 provides a ligand contact to K(+). S92 serves as a coordination point for ATP. A substrate-binding site is contributed by T144.

It belongs to the type III pantothenate kinase family. As to quaternary structure, homodimer. NH4(+) is required as a cofactor. The cofactor is K(+).

The protein resides in the cytoplasm. The enzyme catalyses (R)-pantothenate + ATP = (R)-4'-phosphopantothenate + ADP + H(+). Its pathway is cofactor biosynthesis; coenzyme A biosynthesis; CoA from (R)-pantothenate: step 1/5. Its function is as follows. Catalyzes the phosphorylation of pantothenate (Pan), the first step in CoA biosynthesis. This is Type III pantothenate kinase from Campylobacter jejuni subsp. jejuni serotype O:2 (strain ATCC 700819 / NCTC 11168).